Consider the following 202-residue polypeptide: Holliday junction resolvase RecU (202 aa).

Thr85, Asp87, Glu100, and Gln119 together coordinate Mg(2+).

This sequence belongs to the RecU family. Mg(2+) is required as a cofactor.

The protein resides in the cytoplasm. The catalysed reaction is Endonucleolytic cleavage at a junction such as a reciprocal single-stranded crossover between two homologous DNA duplexes (Holliday junction).. Its function is as follows. Endonuclease that resolves Holliday junction intermediates in genetic recombination. Cleaves mobile four-strand junctions by introducing symmetrical nicks in paired strands. Promotes annealing of linear ssDNA with homologous dsDNA. Required for DNA repair, homologous recombination and chromosome segregation. In Streptococcus uberis (strain ATCC BAA-854 / 0140J), this protein is Holliday junction resolvase RecU.